A 483-amino-acid polypeptide reads, in one-letter code: Aspartyl/glutamyl-tRNA(Asn/Gln) amidotransferase subunit B (483 aa).

The protein belongs to the GatB/GatE family. GatB subfamily. As to quaternary structure, heterotrimer of A, B and C subunits.

It catalyses the reaction L-glutamyl-tRNA(Gln) + L-glutamine + ATP + H2O = L-glutaminyl-tRNA(Gln) + L-glutamate + ADP + phosphate + H(+). The enzyme catalyses L-aspartyl-tRNA(Asn) + L-glutamine + ATP + H2O = L-asparaginyl-tRNA(Asn) + L-glutamate + ADP + phosphate + 2 H(+). Its function is as follows. Allows the formation of correctly charged Asn-tRNA(Asn) or Gln-tRNA(Gln) through the transamidation of misacylated Asp-tRNA(Asn) or Glu-tRNA(Gln) in organisms which lack either or both of asparaginyl-tRNA or glutaminyl-tRNA synthetases. The reaction takes place in the presence of glutamine and ATP through an activated phospho-Asp-tRNA(Asn) or phospho-Glu-tRNA(Gln). This is Aspartyl/glutamyl-tRNA(Asn/Gln) amidotransferase subunit B from Rickettsia rickettsii (strain Sheila Smith).